Here is a 208-residue protein sequence, read N- to C-terminus: Mediator of RNA polymerase II transcription subunit 18 (208 aa).

This sequence belongs to the Mediator complex subunit 18 family. Component of the Mediator complex.

The protein resides in the nucleus. Component of the Mediator complex, a coactivator involved in the regulated transcription of nearly all RNA polymerase II-dependent genes. Mediator functions as a bridge to convey information from gene-specific regulatory proteins to the basal RNA polymerase II transcription machinery. Mediator is recruited to promoters by direct interactions with regulatory proteins and serves as a scaffold for the assembly of a functional preinitiation complex with RNA polymerase II and the general transcription factors. The sequence is that of Mediator of RNA polymerase II transcription subunit 18 (med18) from Xenopus tropicalis (Western clawed frog).